A 1173-amino-acid chain; its full sequence is MNVPCVVGMNEVAWQESRGIMHASSGQEALGVGVGMVPSGVSSAGQAHGNNPHAMPPGAPSAQVPLSGRSQDDATVGYFFQRQAGEQLNGYSNKHRWPTGDSIDAAVRSVDEMNHDFQALALESRGMGELLPAKKFWEHEDPAKDGQKGMFLADEWRENTWGASHHSMSQPIMVQRRPGQGFHGNHDVASVLSPRSESGGLGVSMVEYVLSSSPADKLDPRFRKGVFSVRDCELDGPEKGEQKCKASPFEEEKKRDLISADTDNVSKLNGRGLPNGIESDCKDFNRTPGSRQASPTEITERIGPNSISAEVLGQHQNPMSNKPLSDEFPSTESQNLDGMEQVGLHSLQFDYPGNQIQMDSAGAGVGLFDYNTQQQMFQRQNALTVQQLTAAQQQQQQFTLAAAQQPHLAGMFSTGLAPAAFVPNPYIISAGHPGADPYTTLAGPAVVSPQYYGIPWGVYPAGLFQQQAAAAAQAANSNNQQAATQASQGQQQVMRATSNQRPLTPNQAQQGQQPESLAAANQAQIFGQGLATSMPGYQLLTPTAYYDQTGALVVGPGARAGLAAQVRLVASAPVLLSPAAAQAATATGANSLTGATNGMFRQMGPQQQQQQQQQQHQQQQQQPNANLHSNSFYGNSTMSNNSQSSSLFSPGPGQPGSTSLGFGSSNSLGAAIGSAFGGFGSSVGNSAGSSGSRRDSLSASCDLYKRSSSSLAAIGQPYYNSLGFSSSPSPISMPLPSQTSGHSLTPPPSLSSHGSSSSLHLGGLTNGSGRYFSAAPGAEAKYRSAANTSSFFSSNSQLFPPSRLRYNRADIMPSGRSRLLEDFRNNRFPNLQLRDLMGHIVEFSQDQHGSRFIQQKLERASPAERQLVFSEILQAAYQLMTDVFGNYVIQKFFEFGSMDQKLALATRIRGHVLPLALQMYGCRVIQKALESISTDQQSEMVRELDGHVLKCVKDQNGNHVVQKCIECVTPQSLHFIIEAFKGQVYVLSTHPYGCRVIQRILEHCTPEQTLPILEELHQSTEQLVQDQYGNYVIQHVLEHGRSDDKSKIVCEVRGQVLVLSQHKFASNVVEKCVTHSSRTERAFLIDEICCQNDGPHSALYTMMKDQYANYVVQKMIDMAEPAQRKIIMHKIRPHITTLRKYTYGKHILAKLEKYYMKNSPDLGLLVGPSNGML.

5 disordered regions span residues 41–68 (VSSA…PLSG), 265–296 (VSKL…ASPT), 480–518 (QQAA…ESLA), 592–662 (LTGA…SLGF), and 730–759 (PISM…SSSL). Positions 287-296 (TPGSRQASPT) are enriched in polar residues. Residues 480-492 (QQAATQASQGQQQ) show a composition bias toward low complexity. Polar residues predominate over residues 493–518 (VMRATSNQRPLTPNQAQQGQQPESLA). The segment covering 606–622 (QQQQQQQQQQHQQQQQQ) has biased composition (low complexity). The segment covering 623–633 (PNANLHSNSFY) has biased composition (polar residues). A compositionally biased stretch (low complexity) spans 634-657 (GNSTMSNNSQSSSLFSPGPGQPGS). Residues 815-1155 (GRSRLLEDFR…HILAKLEKYY (341 aa)) form the PUM-HD domain. Pumilio repeat units follow at residues 835–870 (DLMG…LVFS), 871–906 (EILQ…ALAT), 907–942 (RIRG…EMVR), 943–978 (ELDG…FIIE), 979–1014 (AFKG…PILE), 1015–1050 (ELHQ…KIVC), 1051–1086 (EVRG…FLID), 1087–1129 (EICC…IIMH), and 1130–1167 (KIRP…LLVG). The tract at residues 850-854 (SRFIQ) is adenine-nucleotide binding in RNA target. The tract at residues 886 to 890 (NYVIQ) is uracil-nucleotide binding in RNA target. An adenine-nucleotide binding in RNA target region spans residues 922 to 926 (CRVIQ). The non-specific-nucleotide binding in RNA target stretch occupies residues 958 to 962 (NHVVQ). The tract at residues 994-998 (CRVIQ) is adenine-nucleotide binding in RNA target. The interval 1030-1034 (NYVIQ) is uracil-nucleotide binding in RNA target. The segment at 1066 to 1070 (SNVVE) is guanine-nucleotide binding in RNA target. The interval 1109–1113 (NYVVQ) is uracil-nucleotide binding in RNA target.

Component of a complex with papd4, sympk, tacc3, parn, dazl and cpeb1. Phosphorylated.

The protein localises to the cytoplasm. It is found in the P-body. Its subcellular location is the cytoplasmic granule. In terms of biological role, sequence-specific RNA-binding protein that acts as a post-transcriptional repressor by binding the 3'-UTR of mRNA targets. Binds to an RNA consensus sequence, the Pumilio Response Element (PRE), 5'-UGUANAUA-3', that is related to the Nanos Response Element (NRE). Mediates post-transcriptional repression of transcripts via different mechanisms: acts via direct recruitment of deadenylase complexes leading to translational inhibition and mRNA degradation. Also mediates deadenylation-independent repression by promoting accessibility of miRNAs. In Xenopus laevis (African clawed frog), this protein is Pumilio homolog 2 (pum2).